Consider the following 394-residue polypeptide: Elongation factor Tu (394 aa).

One can recognise a tr-type G domain in the interval 10–205 (KPHVNIGTIG…VDTWIPLPPR (196 aa)). The interval 19-26 (GHVDHGKT) is G1. A GTP-binding site is contributed by 19 to 26 (GHVDHGKT). Position 26 (threonine 26) interacts with Mg(2+). The tract at residues 60–64 (GITIN) is G2. A G3 region spans residues 81 to 84 (DCPG). GTP-binding positions include 81-85 (DCPGH) and 136-139 (NKCD). The G4 stretch occupies residues 136–139 (NKCD). The tract at residues 174 to 176 (SAL) is G5.

The protein belongs to the TRAFAC class translation factor GTPase superfamily. Classic translation factor GTPase family. EF-Tu/EF-1A subfamily. Monomer.

The protein resides in the cytoplasm. The enzyme catalyses GTP + H2O = GDP + phosphate + H(+). Functionally, GTP hydrolase that promotes the GTP-dependent binding of aminoacyl-tRNA to the A-site of ribosomes during protein biosynthesis. The protein is Elongation factor Tu of Phocaeicola vulgatus (strain ATCC 8482 / DSM 1447 / JCM 5826 / CCUG 4940 / NBRC 14291 / NCTC 11154) (Bacteroides vulgatus).